The primary structure comprises 138 residues: Putative pre-16S rRNA nuclease (138 aa).

Belongs to the YqgF nuclease family.

It localises to the cytoplasm. Its function is as follows. Could be a nuclease involved in processing of the 5'-end of pre-16S rRNA. This Escherichia coli O7:K1 (strain IAI39 / ExPEC) protein is Putative pre-16S rRNA nuclease.